We begin with the raw amino-acid sequence, 92 residues long: Progonadoliberin-1 (92 aa).

Positions 1 to 23 are cleaved as a signal peptide; sequence MELVPKFLAGLILLTLCVGGCYA. The residue at position 24 (Q24) is a Pyrrolidone carboxylic acid. G33 is modified (glycine amide).

The protein belongs to the GnRH family.

Its subcellular location is the secreted. Functionally, stimulates the secretion of gonadotropins; it stimulates the secretion of both luteinizing and follicle-stimulating hormones. This chain is Progonadoliberin-1 (GNRH1), found in Tupaia belangeri (Common tree shrew).